The primary structure comprises 399 residues: All trans-polyprenyl-diphosphate synthase PDSS2 (399 aa).

Belongs to the FPP/GGPP synthase family. In terms of assembly, heterotetramer composed of 2 PDSS1/DPS1 and 2 PDSS2/DLP1 subunits.

It localises to the mitochondrion. It carries out the reaction 7 isopentenyl diphosphate + (2E,6E)-farnesyl diphosphate = all-trans-decaprenyl diphosphate + 7 diphosphate. The enzyme catalyses 6 isopentenyl diphosphate + (2E,6E)-farnesyl diphosphate = all-trans-nonaprenyl diphosphate + 6 diphosphate. The protein operates within cofactor biosynthesis; ubiquinone biosynthesis. Heterotetrameric enzyme that catalyzes the condensation of farnesyl diphosphate (FPP), which acts as a primer, and isopentenyl diphosphate (IPP) to produce prenyl diphosphates of varying chain lengths and participates in the determination of the side chain of ubiquinone. Supplies nona and decaprenyl diphosphate, the precursors for the side chain of the isoprenoid quinones ubiquinone-9 (Q9) and ubiquinone-10 (Q10) respectively. The enzyme adds isopentenyl diphosphate molecules sequentially to farnesyl diphosphate with trans stereochemistry. May play a role during cerebellar development. May regulate mitochondrial respiratory chain function. The chain is All trans-polyprenyl-diphosphate synthase PDSS2 from Homo sapiens (Human).